Reading from the N-terminus, the 221-residue chain is MEKRMKLRVSRIVRSSLSSCRPRDLYDVVETCAVTSKATSSERFFVTKAKTKTPSRPKSHASSCPRASPIFPPNPFYEESRSFRDLRKKVKTNRKQRSQFGSDPLFASRFKSTGSWYWSCSEEEDEGDKEESEDDDSDTLFSSRSFSSDSSKAESFAVVKKSKDPYEDFRTSMVEMIVERQIFAPAELQQLLQCFLSLNSRQHHKVIVQVFLEIYATLFSP.

Residues 124 to 138 (EDEGDKEESEDDDSD) are compositionally biased toward acidic residues. Positions 124 to 147 (EDEGDKEESEDDDSDTLFSSRSFS) are disordered. Residues 158-217 (VVKKSKDPYEDFRTSMVEMIVERQIFAPAELQQLLQCFLSLNSRQHHKVIVQVFLEIYAT) form the OVATE domain.

Expressed in roots, rosette and cauline leaves, shoots, stems, flower buds and siliques.

It is found in the nucleus. Functionally, transcriptional repressor that regulates multiple aspects of plant growth and development through the regulation of BEL1-LIKE (BLH) and KNOX TALE (KNAT) homeodomain transcription factors. The protein is Transcription repressor OFP8 (OFP8) of Arabidopsis thaliana (Mouse-ear cress).